The sequence spans 609 residues: Sporulation-specific protein 21 (609 aa).

Disordered regions lie at residues 1–50, 68–96, and 124–165; these read MDNI…LENS, PASK…DGNS, and KLDS…SIKG. Polar residues predominate over residues 10 to 31; it reads MEGTSTMTVTSRSSEDSSCISN. Positions 32–43 are enriched in basic and acidic residues; it reads HEQDTDTHKDGD. The segment covering 68 to 81 has biased composition (low complexity); it reads PASKSSRSIGSMKS. Composition is skewed to polar residues over residues 82–96 and 127–136; these read NQSL…DGNS and STGSQRSKNN. Over residues 143-159 the composition is skewed to low complexity; that stretch reads SSTTSQTTCSSSSSSSS. 3 coiled-coil regions span residues 283–342, 357–393, and 424–483; these read RTKI…DNES, RETL…ATNF, and ENLT…LLIE. The tract at residues 586-609 is disordered; it reads DQKSNQNSSTPYKQSQRQVPHSIK. Polar residues predominate over residues 587–609; that stretch reads QKSNQNSSTPYKQSQRQVPHSIK.

The protein belongs to the MPC70 family. In terms of assembly, interacts directly with MPC54, NUD1 and SPC42. Interacts with ADY3. Interacts with ADY4. Probable component of a SPB complex composed of ADY3, SSP1, DON1, MPC54, SPO21/MPC70, NUD1 and CNM67.

It is found in the prospore membrane. It localises to the cytoplasm. Its subcellular location is the cytoskeleton. The protein resides in the spindle pole. In terms of biological role, involved in the pathway that organizes the shaping and sizing of the prospore membrane (PSM) during sporulation. May provide a meiosis-specific scaffold for the assembly of other proteins on spindle pole bodies (SPBs), and may be a limiting component for SPB formation. The chain is Sporulation-specific protein 21 (SPO21) from Saccharomyces cerevisiae (strain ATCC 204508 / S288c) (Baker's yeast).